Reading from the N-terminus, the 227-residue chain is UPF0758 protein CPE2144 (227 aa).

The MPN domain maps to 105-227 (KISKPSDVAK…FISLKEKDIL (123 aa)). Residues H176, H178, and D189 each coordinate Zn(2+). Residues 176 to 189 (HNHPSGDPTPSRDD) carry the JAMM motif motif.

Belongs to the UPF0758 family.

In Clostridium perfringens (strain 13 / Type A), this protein is UPF0758 protein CPE2144.